The primary structure comprises 154 residues: 3-hydroxyacyl-[acyl-carrier-protein] dehydratase FabZ (154 aa).

His-54 is a catalytic residue.

The protein belongs to the thioester dehydratase family. FabZ subfamily.

It localises to the cytoplasm. The catalysed reaction is a (3R)-hydroxyacyl-[ACP] = a (2E)-enoyl-[ACP] + H2O. In terms of biological role, involved in unsaturated fatty acids biosynthesis. Catalyzes the dehydration of short chain beta-hydroxyacyl-ACPs and long chain saturated and unsaturated beta-hydroxyacyl-ACPs. This chain is 3-hydroxyacyl-[acyl-carrier-protein] dehydratase FabZ, found in Shewanella oneidensis (strain ATCC 700550 / JCM 31522 / CIP 106686 / LMG 19005 / NCIMB 14063 / MR-1).